Here is a 106-residue protein sequence, read N- to C-terminus: Urease subunit beta (106 aa).

Belongs to the urease beta subunit family. Heterotrimer of UreA (gamma), UreB (beta) and UreC (alpha) subunits. Three heterotrimers associate to form the active enzyme.

It localises to the cytoplasm. The catalysed reaction is urea + 2 H2O + H(+) = hydrogencarbonate + 2 NH4(+). It participates in nitrogen metabolism; urea degradation; CO(2) and NH(3) from urea (urease route): step 1/1. The chain is Urease subunit beta from Prochlorococcus marinus (strain MIT 9301).